The primary structure comprises 307 residues: Cyclin-dependent kinase 5 activator 1 (307 aa).

Gly2 carries N-myristoyl glycine lipidation. Ser8 bears the Phosphoserine; by CDK5 mark. The tract at residues 97-136 (TFAQPPPAQPPAPPASQLSGSQTGGSSSVKKAPHPAVTSA) is disordered. Residues 100 to 110 (QPPPAQPPAPP) are compositionally biased toward pro residues. Residues 111–124 (ASQLSGSQTGGSSS) show a composition bias toward low complexity. The residue at position 138 (Thr138) is a Phosphothreonine; by CDK5.

This sequence belongs to the cyclin-dependent kinase 5 activator family. As to quaternary structure, heterodimer composed of a catalytic subunit CDK5 and a regulatory subunit CDK5R1 (p25) and macromolecular complex composed of at least CDK5, CDK5R1 (p35) and CDK5RAP1 or CDK5RAP2 or CDK5RAP3. Only the heterodimer shows kinase activity. Interacts with EPHA4 and NGEF; may mediate the activation of NGEF by EPHA4. Interacts with RASGRF2. The complex p35/CDK5 interacts with CLOCK. The p35 form is proteolytically cleaved by calpain, giving rise to the p25 form. P35 has a 5 to 10 fold shorter half-life compared to p25. The conversion results in deregulation of the CDK5 kinase: p25/CDK5 kinase displays an increased and altered tau phosphorylation in comparison to the p35/CDK5 kinase in vivo. In terms of processing, myristoylated. A proper myristoylation signal is essential for the proper distribution of p35. Post-translationally, ubiquitinated, leading to its degradation: degradation of p35 by proteasome results in down-regulation of CDK5 activity. During this process, CDK5 phosphorylates p35 and induces its ubiquitination and subsequent degradation. Ubiquitinated by the CRL2(FEM1B) complex, which recognizes the -Gly-Leu-Asp-Arg C-degron at the C-terminus, leading to its degradation. Phosphorylation at Ser-8 and Thr-138 by CDK5 prevents calpain-mediated proteolysis. As to expression, brain and neuron specific.

The protein localises to the cell membrane. Its subcellular location is the cell projection. It localises to the neuron projection. It is found in the nucleus. The protein resides in the cytoplasm. The protein localises to the perinuclear region. Its subcellular location is the perikaryon. In terms of biological role, p35 is a neuron specific activator of CDK5. The complex p35/CDK5 is required for neurite outgrowth and cortical lamination. Involved in dendritic spine morphogenesis by mediating the EFNA1-EPHA4 signaling. Activator of TPKII. The complex p35/CDK5 participates in the regulation of the circadian clock by modulating the function of CLOCK protein: phosphorylates CLOCK at 'Thr-451' and 'Thr-461' and regulates the transcriptional activity of the CLOCK-BMAL1 heterodimer in association with altered stability and subcellular distribution. This chain is Cyclin-dependent kinase 5 activator 1 (CDK5R1), found in Homo sapiens (Human).